A 354-amino-acid polypeptide reads, in one-letter code: MTAVNVALIRDTKWLTLEVCREFQRGTCSRADADCKFAHPPRVCHVENGRVVACFDSLKGRCTRENCKYLHPPPHLKTQLEINGRNNLIQQKTAAAMFAQQMQLMLQNAQMSSLGSFPMTPSIPANPPMAFNPYIPHPGMGLVPAELVPNTPVLIPGNPPLAMPGAVGPKLMRSDKLEVCREFQRGNCTRGENDCRYAHPTDASMIEASDNTVTICMDYIKGRCSREKCKYFHPPAHLQARLKAAHHQMNHSAASAMALQPGTLQLIPKRSALEKPNGATPVFNPTVFHCQQALTNLQLPQPAFIPAGPILCMAPASNIVPMMHGATPTTVSAATTPATSVPFAAPTTGNQLKF.

4 consecutive C3H1-type zinc fingers follow at residues 14-42 (WLTL…HPPR), 48-74 (NGRV…HPPP), 174-202 (SDKL…HPTD), and 210-236 (DNTV…HPPA).

The protein belongs to the muscleblind family. In terms of tissue distribution, highly expressed in the placenta.

It localises to the nucleus. Its subcellular location is the cytoplasm. Its function is as follows. Mediates pre-mRNA alternative splicing regulation. Acts either as activator or repressor of splicing on specific pre-mRNA targets. Inhibits cardiac troponin-T (TNNT2) pre-mRNA exon inclusion but induces insulin receptor (IR) pre-mRNA exon inclusion in muscle. Antagonizes the alternative splicing activity pattern of CELF proteins. May play a role in myotonic dystrophy pathophysiology (DM). Could inhibit terminal muscle differentiation, acting at approximately the time of myogenin induction. The sequence is that of Muscleblind-like protein 3 (MBNL3) from Homo sapiens (Human).